Here is a 173-residue protein sequence, read N- to C-terminus: NADH-ubiquinone oxidoreductase chain 6 (173 aa).

A run of 5 helical transmembrane segments spans residues 1–21 (MVYF…AVAS), 25–45 (PYFA…LLVG), 53–73 (LVLF…TAAL), 82–102 (WGDW…FFVG), and 141–161 (GIML…ILEL).

The protein belongs to the complex I subunit 6 family.

Its subcellular location is the mitochondrion membrane. It catalyses the reaction a ubiquinone + NADH + 5 H(+)(in) = a ubiquinol + NAD(+) + 4 H(+)(out). In terms of biological role, core subunit of the mitochondrial membrane respiratory chain NADH dehydrogenase (Complex I) that is believed to belong to the minimal assembly required for catalysis. Complex I functions in the transfer of electrons from NADH to the respiratory chain. The immediate electron acceptor for the enzyme is believed to be ubiquinone. This is NADH-ubiquinone oxidoreductase chain 6 (MT-ND6) from Squalus acanthias (Spiny dogfish).